We begin with the raw amino-acid sequence, 442 residues long: Elongation factor 1-gamma (442 aa).

Residues Ala2–Ser87 enclose the GST N-terminal domain. The GST C-terminal domain maps to Thr88–Phe216. Basic and acidic residues-rich tracts occupy residues Lys227–Gly242 and Gln249–Pro263. The interval Lys227–Ala273 is disordered. Residues Ala281–Lys442 enclose the EF-1-gamma C-terminal domain.

EF-1 is composed of four subunits: alpha, beta, delta, and gamma.

Probably plays a role in anchoring the complex to other cellular components. In Danio rerio (Zebrafish), this protein is Elongation factor 1-gamma (eef1g).